The primary structure comprises 238 residues: uncharacterized protein (238 aa).

The signal sequence occupies residues Met1–Ala19. Residues Tyr20–Lys197 lie on the Lumenal side of the membrane. Residues Tyr198–Tyr216 form a helical membrane-spanning segment. Residues Arg217–Lys238 lie on the Cytoplasmic side of the membrane.

The protein resides in the endoplasmic reticulum membrane. This is an uncharacterized protein from Schizosaccharomyces pombe (strain 972 / ATCC 24843) (Fission yeast).